Consider the following 361-residue polypeptide: 3-dehydroquinate synthase (361 aa).

The protein belongs to the archaeal-type DHQ synthase family.

It catalyses the reaction 2-amino-2,3,7-trideoxy-D-lyxo-hept-6-ulosonate + NAD(+) + H2O = 3-dehydroquinate + NH4(+) + NADH + H(+). Its function is as follows. Catalyzes the oxidative deamination and cyclization of 2-amino-3,7-dideoxy-D-threo-hept-6-ulosonic acid (ADH) to yield 3-dehydroquinate (DHQ), which is fed into the canonical shikimic pathway of aromatic amino acid biosynthesis. The protein is 3-dehydroquinate synthase of Methanococcus vannielii (strain ATCC 35089 / DSM 1224 / JCM 13029 / OCM 148 / SB).